Reading from the N-terminus, the 182-residue chain is Dual-action ribosomal maturation protein DarP (182 aa).

It belongs to the DarP family.

It is found in the cytoplasm. Member of a network of 50S ribosomal subunit biogenesis factors which assembles along the 30S-50S interface, preventing incorrect 23S rRNA structures from forming. Promotes peptidyl transferase center (PTC) maturation. The chain is Dual-action ribosomal maturation protein DarP from Serratia proteamaculans (strain 568).